An 822-amino-acid chain; its full sequence is uncharacterized protein (822 aa).

The interval 1 to 230 (MARGKRSTQR…NAAPLNKTDA (230 aa)) is disordered. Ser27 is modified (phosphoserine). The segment covering 34–44 (SKAKKNKKKLN) has biased composition (basic residues). 3 positions are modified to phosphoserine: Ser47, Ser51, and Ser55. Phosphotyrosine is present on Tyr57. A compositionally biased stretch (acidic residues) spans 61-70 (PEDDEVDEEV). Residues 73 to 85 (VKKKPSKKSKKAK) are compositionally biased toward basic residues. Residues 92 to 106 (FADEQSVEEEEEEDS) show a composition bias toward acidic residues. Residue Ser97 is modified to Phosphoserine. Positions 111-121 (RKNKKSSKKAS) are enriched in basic residues. Acidic residues-rich tracts occupy residues 129–144 (LADDMDDLSLDEEESE) and 163–172 (SEALDDGDIE). Phosphoserine is present on residues Ser137 and Ser163. ABC transporter domains lie at 276–519 (LQVE…VQLA) and 594–809 (IKFQ…AKER). Residues 308–315 (APNGSGKS) and 627–634 (GPNGAGKT) each bind ATP.

Belongs to the ABC transporter superfamily.

It is found in the cytoplasm. This is an uncharacterized protein from Schizosaccharomyces pombe (strain 972 / ATCC 24843) (Fission yeast).